Here is a 410-residue protein sequence, read N- to C-terminus: Diguanylate cyclase DgcM (410 aa).

PAS domains lie at 3–70 (THNF…NQHD) and 129–198 (GFYA…HLPG). One can recognise a PAC domain in the interval 199-251 (GHKPLNFIHKLADGSTRHVQTYAGPIEIYGDKLMLCIVHDITEQKRLEEQLEH). Residues 283-410 (QDYSLLLIDT…NDGRNRVLAA (128 aa)) enclose the GGDEF domain. Aspartate 291 is a Mg(2+) binding site. The substrate site is built by asparagine 299, histidine 304, and aspartate 308. Glutamate 334 contributes to the Mg(2+) binding site. Glutamate 334 serves as the catalytic Proton acceptor.

Mg(2+) is required as a cofactor.

It carries out the reaction 2 GTP = 3',3'-c-di-GMP + 2 diphosphate. It participates in purine metabolism; 3',5'-cyclic di-GMP biosynthesis. Part of a signaling cascade that regulates curli biosynthesis. The cascade is composed of two cyclic-di-GMP (c-di-GMP) control modules, in which c-di-GMP controlled by the DgcE/PdeH pair (module I) regulates the activity of the DgcM/PdeR pair (module II), which in turn regulates activity of the transcription factor MlrA and expression of the master biofilm regulator csgD. In Escherichia coli O157:H7, this protein is Diguanylate cyclase DgcM.